A 165-amino-acid polypeptide reads, in one-letter code: Pyruvoyl-dependent arginine decarboxylase (165 aa).

Ser-53 carries the post-translational modification Pyruvic acid (Ser).

The protein belongs to the PdaD family. As to quaternary structure, trimer of an alpha-beta dimer. It depends on pyruvate as a cofactor.

The catalysed reaction is L-arginine + H(+) = agmatine + CO2. This Methanocaldococcus jannaschii (strain ATCC 43067 / DSM 2661 / JAL-1 / JCM 10045 / NBRC 100440) (Methanococcus jannaschii) protein is Pyruvoyl-dependent arginine decarboxylase (pdaD).